The following is a 413-amino-acid chain: Histidine--tRNA ligase (413 aa).

This sequence belongs to the class-II aminoacyl-tRNA synthetase family. In terms of assembly, homodimer.

It localises to the cytoplasm. The catalysed reaction is tRNA(His) + L-histidine + ATP = L-histidyl-tRNA(His) + AMP + diphosphate + H(+). The protein is Histidine--tRNA ligase of Geobacter sulfurreducens (strain ATCC 51573 / DSM 12127 / PCA).